A 470-amino-acid polypeptide reads, in one-letter code: tRNA-2-methylthio-N(6)-dimethylallyladenosine synthase (470 aa).

Residues 20–138 enclose the MTTase N-terminal domain; the sequence is PRVHIETFGC…LPELVERARS (119 aa). [4Fe-4S] cluster-binding residues include cysteine 29, cysteine 65, cysteine 99, cysteine 176, cysteine 180, and cysteine 183. The Radical SAM core domain maps to 162–398; that stretch reads REGDLKAWVT…MEVQNRIARA (237 aa). In terms of domain architecture, TRAM spans 401–464; the sequence is EARVGKVYDI…TWTLEGELVE (64 aa).

The protein belongs to the methylthiotransferase family. MiaB subfamily. As to quaternary structure, monomer. It depends on [4Fe-4S] cluster as a cofactor.

Its subcellular location is the cytoplasm. It carries out the reaction N(6)-dimethylallyladenosine(37) in tRNA + (sulfur carrier)-SH + AH2 + 2 S-adenosyl-L-methionine = 2-methylsulfanyl-N(6)-dimethylallyladenosine(37) in tRNA + (sulfur carrier)-H + 5'-deoxyadenosine + L-methionine + A + S-adenosyl-L-homocysteine + 2 H(+). Catalyzes the methylthiolation of N6-(dimethylallyl)adenosine (i(6)A), leading to the formation of 2-methylthio-N6-(dimethylallyl)adenosine (ms(2)i(6)A) at position 37 in tRNAs that read codons beginning with uridine. The sequence is that of tRNA-2-methylthio-N(6)-dimethylallyladenosine synthase from Symbiobacterium thermophilum (strain DSM 24528 / JCM 14929 / IAM 14863 / T).